We begin with the raw amino-acid sequence, 287 residues long: 3-alpha-hydroxysteroid sulfotransferase (287 aa).

44-49 (KSGTNW) contacts 3'-phosphoadenylyl sulfate. Residues Trp-72 and Trp-77 each coordinate substrate. His-99 (proton acceptor) is an active-site residue. 3'-phosphoadenylyl sulfate contacts are provided by residues Arg-121, Ser-129, Tyr-184, 218–223 (SSFQFM), and 247–249 (RKG).

The protein belongs to the sulfotransferase 1 family. In terms of assembly, homodimer. As to expression, adrenal gland and liver.

It is found in the cytoplasm. The catalysed reaction is an alcohol + 3'-phosphoadenylyl sulfate = an alkyl sulfate + adenosine 3',5'-bisphosphate + H(+). In terms of biological role, sulfotransferase that utilizes 3'-phospho-5'-adenylyl sulfate (PAPS) as sulfonate donor to catalyze the sulfonation of 3-alpha-hydroxyl groups of neutral steroids. This chain is 3-alpha-hydroxysteroid sulfotransferase (STD1), found in Cavia porcellus (Guinea pig).